We begin with the raw amino-acid sequence, 714 residues long: MIFGFHPLEGGYDVPMRVVGANIPYEWLIYVIMLIPVSVFLFGFWKKLEVWLLAKGEIHRNDKIAQRIWSWFVFSFAQARVIRKPLAGWMHAFLFWGFLVLFLAAGIDAMHNMISWPHLEGNFYIGFSWVVDVLGFLALIGVMVLGFVRYFQKPERLNDTKSSDGWIILLIFAILLTGYFIEGLRIAAQIKLSTTMQQIAYERAASPFGWMFASFFGSMSVDAMLMWHRLLWWFHMAIAFLFIALVPFTKLWHIFASMLNYTFRDLEPSANRMVYNIEEAETFGVENIEDFGWKDLLDLDSCIRCGRCQENCPAYNTGKHLNPKITLIQNMKAHLDAKAPYLLAAKASGAEVEEMAMTEEAAAEEVNPMEQSLLYDVVGSETIWDCTNCRACMEHCPMFIEHIPKIVEMRRNLVMWQGDMPGEAQMAFTNMERNYNPWGVGWAGRAGWLDERGVREMVNLLPEDGKEFEYLLYAGCAVSFDDRYKRVGEALVRLLNKAGVSFGYLGTEEYCCGDSARRLGNEYLYQTLVSQNLESFNNYGVKKIIVVCPHGYTALKNEYPQMGGNYEVYHYTEILAKLVAEGKLKPSKPLGVKMTYHDSCFLGRHNGVYDQPRNVLKAAGGQVIEIEKAKEFGFCCGAGGGRMWLEEEAVLKDGIQYKRINDTRTDQLLVPNPEMIVTNCPFCLTMIADGVKAAEAEESTKVFDVAEVLWKAME.

6 helical membrane passes run 25–45 (YEWL…FGFW), 87–107 (AGWM…AAGI), 125–145 (IGFS…VMVL), 164–184 (DGWI…IEGL), 207–227 (PFGW…MLMW), and 236–256 (MAIA…HIFA). 4Fe-4S ferredoxin-type domains lie at 293 to 324 (WKDL…LNPK) and 375 to 405 (YDVV…HIPK). [4Fe-4S] cluster-binding residues include Cys-302, Cys-305, Cys-308, Cys-312, Cys-386, Cys-389, Cys-392, and Cys-396.

In terms of assembly, might constitute a membrane-associated complex with EtfA (Swol_0697), EtfB (Swol_0696), and the butyryl-CoA dehydrogenase Swol_1933 and/or Swol_2052. Requires [4Fe-4S] cluster as cofactor.

Its subcellular location is the cell membrane. Its pathway is lipid metabolism; butanoate metabolism. Oxidoreductase involved in syntrophic growth of S.wolfei with butyrate. Is presumed to link the electron flow from butyryl-CoA dehydrogenases to the membrane, in conjunction with the electron transfer flavoprotein EtfAB. May transfer electrons to the menaquinone pool of the membrane. In Syntrophomonas wolfei subsp. wolfei (strain DSM 2245B / Goettingen), this protein is EtfAB:quinone oxidoreductase.